The chain runs to 821 residues: Probable phosphoenolpyruvate synthase (821 aa).

The active-site Tele-phosphohistidine intermediate is histidine 444. The substrate site is built by arginine 543, arginine 590, glutamate 687, glycine 709, threonine 710, asparagine 711, and aspartate 712. A Mg(2+)-binding site is contributed by glutamate 687. Residue aspartate 712 coordinates Mg(2+). Cysteine 759 acts as the Proton donor in catalysis.

The protein belongs to the PEP-utilizing enzyme family. The cofactor is Mg(2+).

The catalysed reaction is pyruvate + ATP + H2O = phosphoenolpyruvate + AMP + phosphate + 2 H(+). It functions in the pathway carbohydrate biosynthesis; gluconeogenesis. In terms of biological role, catalyzes the phosphorylation of pyruvate to phosphoenolpyruvate. The sequence is that of Probable phosphoenolpyruvate synthase (ppsA) from Pyrococcus horikoshii (strain ATCC 700860 / DSM 12428 / JCM 9974 / NBRC 100139 / OT-3).